A 161-amino-acid polypeptide reads, in one-letter code: Large ribosomal subunit protein uL11 (161 aa).

Belongs to the universal ribosomal protein uL11 family. In terms of assembly, part of the ribosomal stalk of the 50S ribosomal subunit. Interacts with L10 and the large rRNA to form the base of the stalk. L10 forms an elongated spine to which L12 dimers bind in a sequential fashion forming a multimeric L10(L12)X complex.

Functionally, forms part of the ribosomal stalk which helps the ribosome interact with GTP-bound translation factors. The sequence is that of Large ribosomal subunit protein uL11 from Methanosarcina barkeri (strain Fusaro / DSM 804).